We begin with the raw amino-acid sequence, 389 residues long: MTAPSLSLRHAAPYSTVNSLGFPKPPAQTRVVVAMSGGVDSSVVAAMLAAQGYDVIGVTLQLYDHGAALAKKGACCAGQDIHDARRVAERIGFPHYVLDYENKFRESVIEEFADAYLAGATPVPCIRCNERVKFRDLLQTARELDADCMATGHYIRRLMGPKGAELHMAADPARDQSYFLFSTTQEQLDFLRFPLGGLASKAETRALAAQYGLAVADKPDSQDICFVPNGDYASVIEKLRPGAADPGEIVDMDGNVLGSHRGVIHYTIGQRRGLGIGGLGDPLYVVRLEPDTRRVVVGPKQALATKIVPVTEVNWLGDEPFEDEIAVTARIRSTRPPRPAILRVTGKHRAEIELLDPEEGVSPGQACVFYATEGSRVLGGGWISHRRGG.

ATP-binding positions include 34–41 and Leu-60; that span reads AMSGGVDS. Cys-128 (nucleophile) is an active-site residue. Cys-128 and Cys-225 are oxidised to a cystine. Position 152 (Gly-152) interacts with ATP. The tract at residues 174–176 is interaction with tRNA; that stretch reads RDQ. The active-site Cysteine persulfide intermediate is the Cys-225.

Belongs to the MnmA/TRMU family.

It localises to the cytoplasm. The catalysed reaction is S-sulfanyl-L-cysteinyl-[protein] + uridine(34) in tRNA + AH2 + ATP = 2-thiouridine(34) in tRNA + L-cysteinyl-[protein] + A + AMP + diphosphate + H(+). In terms of biological role, catalyzes the 2-thiolation of uridine at the wobble position (U34) of tRNA, leading to the formation of s(2)U34. This is tRNA-specific 2-thiouridylase MnmA from Paracoccus denitrificans (strain Pd 1222).